We begin with the raw amino-acid sequence, 239 residues long: Orotidine 5'-phosphate decarboxylase (239 aa).

Substrate-binding positions include Asp10, Lys32, 59-68, Thr122, Arg184, Gln193, Gly213, and Arg214; that span reads DLKLHDIPNT. Lys61 functions as the Proton donor in the catalytic mechanism.

It belongs to the OMP decarboxylase family. Type 1 subfamily. As to quaternary structure, homodimer.

It carries out the reaction orotidine 5'-phosphate + H(+) = UMP + CO2. The protein operates within pyrimidine metabolism; UMP biosynthesis via de novo pathway; UMP from orotate: step 2/2. Functionally, catalyzes the decarboxylation of orotidine 5'-monophosphate (OMP) to uridine 5'-monophosphate (UMP). In Geobacillus sp. (strain WCH70), this protein is Orotidine 5'-phosphate decarboxylase.